The primary structure comprises 602 residues: Chaperone protein dnaK (602 aa).

It belongs to the heat shock protein 70 family.

Its subcellular location is the plastid. It is found in the chloroplast. Functionally, acts as a chaperone. The chain is Chaperone protein dnaK from Thalassiosira pseudonana (Marine diatom).